A 151-amino-acid polypeptide reads, in one-letter code: Large ribosomal subunit protein bL9 (151 aa).

It belongs to the bacterial ribosomal protein bL9 family.

Its function is as follows. Binds to the 23S rRNA. This is Large ribosomal subunit protein bL9 from Nitrosococcus oceani (strain ATCC 19707 / BCRC 17464 / JCM 30415 / NCIMB 11848 / C-107).